The chain runs to 314 residues: Olfactory receptor 5D13 (314 aa).

Over 1–27 the chain is Extracellular; that stretch reads MMASERNQSSTPTFILLGFSEYPEIQV. N-linked (GlcNAc...) asparagine glycosylation occurs at asparagine 7. The helical transmembrane segment at 28–48 threads the bilayer; it reads PLFLVFLFVYTVTVVGNLGMI. Over 49-56 the chain is Cytoplasmic; it reads IIIRLNSK. A helical membrane pass occupies residues 57-77; that stretch reads LHTIMCFFLSHLSLTDFCFST. Residues 78–101 are Extracellular-facing; it reads VVTPKLLENLVVEYRTISFSGCIM. A helical membrane pass occupies residues 102–122; that stretch reads QFCFACIFGVTETFMLAAMAY. Residues 123-141 lie on the Cytoplasmic side of the membrane; it reads DRFVAVCKPLLYTTIMSQK. Residues 142-162 traverse the membrane as a helical segment; sequence LCALLVAGSYTWGIVCSLILT. The Extracellular segment spans residues 163 to 198; that stretch reads YFLLDLSFCESTFINNFICDHSVIVSASYSDPYISQ. A helical membrane pass occupies residues 199-219; it reads RLCFIIAIFNEVSSLIIILTS. Topologically, residues 220–239 are cytoplasmic; it reads YMLIFTTIMKMRSASGRQKT. The helical transmembrane segment at 240-260 threads the bilayer; it reads FSTCASHLTAITIFHGTILFL. The Extracellular segment spans residues 261–273; sequence YCVPNPKTSSLIV. A helical transmembrane segment spans residues 274-294; it reads TVASVFYTVAIPMLNPLIYSL. Topologically, residues 295 to 314 are cytoplasmic; the sequence is RNKDINNMFEKLVVTKLIYH.

The protein belongs to the G-protein coupled receptor 1 family.

Its subcellular location is the cell membrane. Functionally, odorant receptor. This Homo sapiens (Human) protein is Olfactory receptor 5D13 (OR5D13).